The following is a 93-amino-acid chain: Cytochrome c oxidase polypeptide 6, mitochondrial (93 aa).

Residues 2-33 (STGNESYNLRYPKGFKGYPYNMYKLEGYGTPK) lie on the Mitochondrial matrix side of the membrane. The chain crosses the membrane as a helical span at residues 34-53 (GYITLIGVVATLTVSGLFFA). At 54–93 (KTRSNKREYPTHNKEWRAKTLAYAKETNADPIYQLPKDKI) the chain is on the mitochondrial intermembrane side.

Belongs to the cytochrome c oxidase IV family. As to quaternary structure, component of the cytochrome c oxidase (complex IV, CIV), a multisubunit enzyme composed of a catalytic core of 3 subunits and seevral supernumerary subunits. The complex exists as a monomer or a dimer and forms supercomplexes (SCs) in the inner mitochondrial membrane with ubiquinol-cytochrome c oxidoreductase (cytochrome b-c1 complex, complex III, CIII).

It is found in the mitochondrion inner membrane. It functions in the pathway energy metabolism; oxidative phosphorylation. Its function is as follows. Component of the cytochrome c oxidase, the last enzyme in the mitochondrial electron transport chain which drives oxidative phosphorylation. The respiratory chain contains 3 multisubunit complexes succinate dehydrogenase (complex II, CII), ubiquinol-cytochrome c oxidoreductase (cytochrome b-c1 complex, complex III, CIII) and cytochrome c oxidase (complex IV, CIV), that cooperate to transfer electrons derived from NADH and succinate to molecular oxygen, creating an electrochemical gradient over the inner membrane that drives transmembrane transport and the ATP synthase. Cytochrome c oxidase is the component of the respiratory chain that catalyzes the reduction of oxygen to water. Electrons originating from reduced cytochrome c in the intermembrane space (IMS) are transferred via the dinuclear copper A center (CU(A)) of subunit 2 and heme A of subunit 1 to the active site in subunit 1, a binuclear center (BNC) formed by heme A3 and copper B (CU(B)). The BNC reduces molecular oxygen to 2 water molecules using 4 electrons from cytochrome c in the IMS and 4 protons from the mitochondrial matrix. This Dictyostelium discoideum (Social amoeba) protein is Cytochrome c oxidase polypeptide 6, mitochondrial (cxfA).